Reading from the N-terminus, the 72-residue chain is MDTDVTNVEDIINEIDREKEEILKNVEIENNKNINKNHPSGYIREALVINTSSNSDSIDKEVIECICHDVGI.

This sequence belongs to the orthopoxvirus OPG197 family.

This Bos taurus (Bovine) protein is Protein OPG197 (OPG197).